Consider the following 422-residue polypeptide: Acetyl-CoA acetyltransferase, mitochondrial (422 aa).

Residues 1 to 28 constitute a mitochondrion transit peptide; the sequence is MPVLAALLRRGPLLQRRVQEIRYAERSY. Lysine 61 carries the post-translational modification N6-acetyllysine; alternate. The residue at position 61 (lysine 61) is an N6-succinyllysine; alternate. Lysine 73 carries the N6-succinyllysine modification. The active-site Acyl-thioester intermediate is the cysteine 121. Lysine 169, lysine 176, lysine 185, and lysine 197 each carry N6-acetyllysine; alternate. Residues lysine 169, lysine 176, lysine 185, and lysine 197 each carry the N6-succinyllysine; alternate modification. Tyrosine 214 is a CoA binding site. Tyrosine 214 is a K(+) binding site. Lysine 218 is modified (N6-acetyllysine; alternate). Lysine 218 bears the N6-succinyllysine; alternate mark. Lysine 238 is subject to N6-succinyllysine. N6-acetyllysine; alternate is present on lysine 240. Lysine 240 is modified (N6-succinyllysine; alternate). Lysine 246 and lysine 252 each carry N6-acetyllysine. CoA contacts are provided by residues 253 to 255 and lysine 258; that span reads RVD. Lysine 258 is modified (N6-acetyllysine; alternate). Residue lysine 258 is modified to N6-succinyllysine; alternate. Residues lysine 261 and lysine 263 each carry the N6-succinyllysine modification. K(+) is bound by residues alanine 275, alanine 276, and alanine 278. Residue serine 279 participates in CoA binding. Lysine 333 carries the N6-acetyllysine modification. Valine 376 contacts K(+). Cysteine 408 functions as the Proton donor/acceptor in the catalytic mechanism.

It belongs to the thiolase-like superfamily. Thiolase family. In terms of assembly, homotetramer. Succinylation at Lys-263, adjacent to a coenzyme A binding site. Desuccinylated by SIRT5.

Its subcellular location is the mitochondrion. The catalysed reaction is 2 acetyl-CoA = acetoacetyl-CoA + CoA. It catalyses the reaction propanoyl-CoA + acetyl-CoA = 2-methyl-3-oxobutanoyl-CoA + CoA. The protein operates within lipid metabolism; fatty acid beta-oxidation. Its activity is regulated as follows. Activated by potassium ions, but not sodium ions. This is one of the enzymes that catalyzes the last step of the mitochondrial beta-oxidation pathway, an aerobic process breaking down fatty acids into acetyl-CoA. Using free coenzyme A/CoA, catalyzes the thiolytic cleavage of medium- to long-chain 3-oxoacyl-CoAs into acetyl-CoA and a fatty acyl-CoA shortened by two carbon atoms. The activity of the enzyme is reversible and it can also catalyze the condensation of two acetyl-CoA molecules into acetoacetyl-CoA. Thereby, it plays a major role in ketone body metabolism. The polypeptide is Acetyl-CoA acetyltransferase, mitochondrial (ACAT1) (Bos taurus (Bovine)).